We begin with the raw amino-acid sequence, 280 residues long: MRIDVLTIFPEYLDPLRHALLGKAIEQGKLAVGVHDLRQWATDAHKSVDDSPYGGGPGMVMKPEVWGPALDDVSSGTASTQDLQSALPHLSKPRHDDIHGVEARSYGESEDSDKPLLIVPTPAGKPFTQADAQAWSAEEHIVFACGRYEGIDQRVVDDAQQRYRVREVSIGDYVLIGGEVAALVIAEAVVRLIPGVLGNRRSHEEDSFSDGLLEGPSYTKPREWRDLQVPDVLTSGDHARVDRWRREQSLARTWQRRPELLDAAELSDADRAYLETLEED.

The segment at 71–94 (DDVSSGTASTQDLQSALPHLSKPR) is disordered. Residues 74 to 84 (SSGTASTQDLQ) show a composition bias toward polar residues. S-adenosyl-L-methionine contacts are provided by residues Gly-146 and 170 to 175 (IGDYVL).

This sequence belongs to the RNA methyltransferase TrmD family. Homodimer.

Its subcellular location is the cytoplasm. It catalyses the reaction guanosine(37) in tRNA + S-adenosyl-L-methionine = N(1)-methylguanosine(37) in tRNA + S-adenosyl-L-homocysteine + H(+). Specifically methylates guanosine-37 in various tRNAs. This Corynebacterium aurimucosum (strain ATCC 700975 / DSM 44827 / CIP 107346 / CN-1) (Corynebacterium nigricans) protein is tRNA (guanine-N(1)-)-methyltransferase.